A 450-amino-acid chain; its full sequence is Ribosomal protein uS12 methylthiotransferase RimO (450 aa).

Residues 7-123 (QKVSMVSLGC…IAEILAEKSG (117 aa)) enclose the MTTase N-terminal domain. 6 residues coordinate [4Fe-4S] cluster: Cys-16, Cys-52, Cys-86, Cys-161, Cys-165, and Cys-168. Residues 147 to 377 (SSPAWFSYLK…MRIQARLSFK (231 aa)) enclose the Radical SAM core domain. One can recognise a TRAM domain in the interval 380 to 448 (RELIGTTEQV…DYDLIGEIQE (69 aa)).

It belongs to the methylthiotransferase family. RimO subfamily. [4Fe-4S] cluster serves as cofactor.

It localises to the cytoplasm. It catalyses the reaction L-aspartate(89)-[ribosomal protein uS12]-hydrogen + (sulfur carrier)-SH + AH2 + 2 S-adenosyl-L-methionine = 3-methylsulfanyl-L-aspartate(89)-[ribosomal protein uS12]-hydrogen + (sulfur carrier)-H + 5'-deoxyadenosine + L-methionine + A + S-adenosyl-L-homocysteine + 2 H(+). Functionally, catalyzes the methylthiolation of an aspartic acid residue of ribosomal protein uS12. The chain is Ribosomal protein uS12 methylthiotransferase RimO from Pelobacter propionicus (strain DSM 2379 / NBRC 103807 / OttBd1).